Here is an 852-residue protein sequence, read N- to C-terminus: Vacuolar protein sorting-associated protein 16 homolog (852 aa).

It belongs to the VPS16 family. Probable core component of at least two putative endosomal tethering complexes, the homotypic fusion and vacuole protein sorting (HOPS) complex and the class C core vacuole/endosome tethering (CORVET) complex. Their common core is composed of the class C Vps proteins vps-11, vps-16 and vps-18, which in HOPS further associates with vps-33.1, vps-39 and vps-41 and in CORVET with vps-8 and vps-33.2.

It localises to the late endosome membrane. It is found in the lysosome membrane. In terms of biological role, plays a role in vesicle-mediated protein trafficking to lysosomal compartments including the endocytic membrane transport pathways. Believed to act as a core component of the putative HOPS and CORVET endosomal tethering complexes which are proposed to be involved in the rab-5-to-rab-7 endosome conversion probably implicating sand-1, and via binding SNAREs and SNARE complexes to mediate tethering and docking events during SNARE-mediated membrane fusion. The HOPS complex is proposed to be recruited to rab-7 on the late endosomal membrane and to regulate late endocytic, phagocytic and autophagic traffic towards lysosomes. Within the HOPS complex, contributes to the normal development of gut granules in the adult intestine. The CORVET complex is proposed to function as a rab-5 effector to mediate early endosome fusion probably in specific endosome subpopulations. Required for recruitment of vps-33.1 to the HOPS complex. Required for fusion of endosomes and autophagosomes with lysosomes; the function is dependent on its association with vps-33.1 but not vps-33.2. The chain is Vacuolar protein sorting-associated protein 16 homolog from Caenorhabditis elegans.